Reading from the N-terminus, the 155-residue chain is Transcriptional repressor NrdR (155 aa).

Residues 3–34 (CPFCHAEETKVVDSRLVADGAQVRRRRECLEC) fold into a zinc finger. The ATP-cone domain maps to 49–139 (PLIIKRDGRR…VYKRFKDVSD (91 aa)).

This sequence belongs to the NrdR family. Zn(2+) serves as cofactor.

Negatively regulates transcription of bacterial ribonucleotide reductase nrd genes and operons by binding to NrdR-boxes. The polypeptide is Transcriptional repressor NrdR (Legionella pneumophila (strain Paris)).